A 565-amino-acid polypeptide reads, in one-letter code: Periplasmic trehalase (565 aa).

Residues 1 to 30 (MKSPTPSRPQKMALIPACIFLCFAALSVQA) form the signal peptide. Substrate contacts are provided by residues Arg-152, 159–160 (WD), Asn-196, 205–207 (RSQ), 277–279 (RPE), and Gly-310. Residues Asp-312 and Glu-496 each act as proton donor/acceptor in the active site. Glu-511 provides a ligand contact to substrate. Residues 539-565 (CDNVPATRPLSESTTQPLKQKEAEPTP) form a disordered region.

Belongs to the glycosyl hydrolase 37 family. As to quaternary structure, monomer.

It is found in the periplasm. It carries out the reaction alpha,alpha-trehalose + H2O = alpha-D-glucose + beta-D-glucose. Its function is as follows. Provides the cells with the ability to utilize trehalose at high osmolarity by splitting it into glucose molecules that can subsequently be taken up by the phosphotransferase-mediated uptake system. In Escherichia coli O7:K1 (strain IAI39 / ExPEC), this protein is Periplasmic trehalase.